Consider the following 804-residue polypeptide: Enhancer of polycomb homolog 2 (804 aa).

4 disordered regions span residues 372–398, 484–507, 602–623, and 642–669; these read QSSDDDEFPQVPSPLSELEEENDPDGS, GFSSSSHVAQPPSSPSRTNASDRH, QQSQQSLQQSHPKAQGSAKSDC, and NSPTPGRSEVNKDQNAGHSNLNGVVQPS. Residues 602-611 show a composition bias toward low complexity; sequence QQSQQSLQQS. Over residues 654–669 the composition is skewed to polar residues; it reads DQNAGHSNLNGVVQPS.

This sequence belongs to the enhancer of polycomb family.

The protein localises to the nucleus. May play a role in transcription or DNA repair. The chain is Enhancer of polycomb homolog 2 (epc2) from Xenopus tropicalis (Western clawed frog).